A 383-amino-acid chain; its full sequence is Succinyl-diaminopimelate desuccinylase (383 aa).

His72 is a Zn(2+) binding site. Asp74 is a catalytic residue. Position 105 (Asp105) interacts with Zn(2+). Catalysis depends on Glu139, which acts as the Proton acceptor. Zn(2+) contacts are provided by Glu140, Glu168, and His356.

Belongs to the peptidase M20A family. DapE subfamily. In terms of assembly, homodimer. Zn(2+) serves as cofactor. Co(2+) is required as a cofactor.

It catalyses the reaction N-succinyl-(2S,6S)-2,6-diaminopimelate + H2O = (2S,6S)-2,6-diaminopimelate + succinate. It participates in amino-acid biosynthesis; L-lysine biosynthesis via DAP pathway; LL-2,6-diaminopimelate from (S)-tetrahydrodipicolinate (succinylase route): step 3/3. Its function is as follows. Catalyzes the hydrolysis of N-succinyl-L,L-diaminopimelic acid (SDAP), forming succinate and LL-2,6-diaminopimelate (DAP), an intermediate involved in the bacterial biosynthesis of lysine and meso-diaminopimelic acid, an essential component of bacterial cell walls. The sequence is that of Succinyl-diaminopimelate desuccinylase from Beijerinckia indica subsp. indica (strain ATCC 9039 / DSM 1715 / NCIMB 8712).